The chain runs to 337 residues: Probable arabinose 5-phosphate isomerase (337 aa).

The SIS domain maps to 58–201; that stretch reads VIDLILACEG…AVSLITARNF (144 aa). Substrate contacts are provided by residues 92 to 93, His99, His105, 131 to 140, 165 to 167, Thr237, and Asp290; these read GT, KLIPSLKNFG, and TVE. His99 is a binding site for Zn(2+). A CBS 1 domain is found at 227-284; that stretch reads MQTRLPTILPTTNFTDCLTVMNEGRMGVALVMENEQLKGIITDGDIRRALTANGAGTL. A CBS 2 domain is found at 292–337; the sequence is MTSSPKTIHQDEFLSKAEDFMKAKKIHSLVVVNDENHVVGLVEFSS.

Belongs to the SIS family. GutQ/KpsF subfamily.

It catalyses the reaction D-arabinose 5-phosphate = D-ribulose 5-phosphate. Its function is as follows. Catalyzes the reversible aldol-ketol isomerization between D-ribulose 5-phosphate (Ru5P) and D-arabinose 5-phosphate (A5P). This Haemophilus influenzae (strain ATCC 51907 / DSM 11121 / KW20 / Rd) protein is Probable arabinose 5-phosphate isomerase.